The chain runs to 256 residues: MGRGRVQLKRIENKINRQVTFSKRRAGLFKKAHEISVLCDAEVALVVFSHKGKLFEYSTDSCMEKILERYERYSYAERQLIAPESDVNTNWSMEYNRLKAKIELLERNQRHYLGEDLQAMSPKELQNLEQQLDTALKHIRSRKNQLMYDSVNELQRKEKAIQEQNSMLSKQIKEREKVLRAQQEQWDQQNHGQNMPPPPPPQEHQIQHPYMLSHQPSPFLNMGGLYEEEDPMAMRRNDLDLSLEPVYNCNLGCFAS.

Positions 1–61 (MGRGRVQLKR…GKLFEYSTDS (61 aa)) constitute an MADS-box domain. One can recognise a K-box domain in the interval 88–178 (NTNWSMEYNR…SKQIKEREKV (91 aa)). The interval 180 to 206 (RAQQEQWDQQNHGQNMPPPPPPQEHQI) is disordered.

Homodimer capable of binding to CArG-box sequences.

The protein localises to the nucleus. In terms of biological role, transcription factor that promotes early floral meristem identity in synergy with LEAFY. Displays a redundant function with CAULIFLOWER in the up-regulation of LEAFY. Required subsequently for the transition of an inflorescence meristem into a floral meristem, and for the normal development of sepals and petals in flowers. Regulates positively B class homeotic proteins. The polypeptide is Floral homeotic protein APETALA 1 (AP1) (Brassica rapa subsp. pekinensis (Chinese cabbage)).